Reading from the N-terminus, the 414-residue chain is Glutamyl-tRNA reductase (414 aa).

Substrate-binding positions include 49–52, Ser108, 113–115, and Gln119; these read TCNR and EPQ. The Nucleophile role is filled by Cys50. Residue 188–193 coordinates NADP(+); the sequence is GAGQTG.

This sequence belongs to the glutamyl-tRNA reductase family. As to quaternary structure, homodimer.

The catalysed reaction is (S)-4-amino-5-oxopentanoate + tRNA(Glu) + NADP(+) = L-glutamyl-tRNA(Glu) + NADPH + H(+). It participates in porphyrin-containing compound metabolism; protoporphyrin-IX biosynthesis; 5-aminolevulinate from L-glutamyl-tRNA(Glu): step 1/2. In terms of biological role, catalyzes the NADPH-dependent reduction of glutamyl-tRNA(Glu) to glutamate 1-semialdehyde (GSA). The sequence is that of Glutamyl-tRNA reductase from Francisella tularensis subsp. novicida (strain U112).